The sequence spans 468 residues: Intramembrane protease 2 (468 aa).

Residues 1–22 (MAEAATEIPPTASNVTVFTFEE) lie on the Lumenal side of the membrane. N14 carries an N-linked (GlcNAc...) asparagine glycan. A helical membrane pass occupies residues 23–43 (QATSSLALYGMSILCIIIGSI). At 44–70 (RSAQYIRTNIDKKRLIEGSITMREARK) the chain is on the cytoplasmic side. The helical transmembrane segment at 71–91 (FPISASLVLFGLYLFFKPAAE) threads the bilayer. The Lumenal segment spans residues 92–168 (RFLWVARVFQ…TNLPTIQKAE (77 aa)). N-linked (GlcNAc...) asparagine glycans are attached at residues N114 and N123. Residues 169-189 (CMQLLTFLICFEGVNAFASLL) traverse the membrane as a helical segment. The Cytoplasmic segment spans residues 190–247 (KPFVTAFLKKMPLVPSFLRFNAPYLFSLKKGNKEMEEGDIEDAKKKETEYLFKIDFDR). Residues 248–265 (YDIIALLMCSPILISHLL) form a helical membrane-spanning segment. The Lumenal segment spans residues 266–267 (KR). A helical membrane pass occupies residues 268–284 (HWITNNIIGVSFSILGI). Over 285–296 (ERLHLASFKAGS) the chain is Cytoplasmic. Residues 297–317 (LLLVGLFFYDIFWVFGTDVMT) form a helical membrane-spanning segment. D306 is an active-site residue. At 318–343 (SVAKGIDAPILLQFPQDIYRNGIMEA) the chain is on the lumenal side. Residues 344-364 (SKHSMLGLGDIVIPGIFIALL) form a helical membrane-spanning segment. Residue D353 is part of the active site. The Cytoplasmic segment spans residues 365 to 388 (RRFDYRVVQTTAESKAPQGSLKGR). The chain crosses the membrane as a helical span at residues 389–409 (YYFVVTVVAYMAGLFITMAVM). Residues 410 to 415 (HHFKAA) are Lumenal-facing. A helical membrane pass occupies residues 416–436 (QPALLYLVPCCLFVPLLLAVI). A PAL motif is present at residues 417–419 (PAL). Topologically, residues 437 to 468 (RGELSALWNYDESRHVDNEENRKKVDSGKKNN) are cytoplasmic.

This sequence belongs to the peptidase A22B family.

It is found in the membrane. The protein resides in the endoplasmic reticulum membrane. In terms of biological role, acts as intramembrane protease. In larvae, required for the complete shedding of the cuticle during molting, possibly by regulating cholesterol uptake via lrp-1. Involved in embryonic and larval development. The sequence is that of Intramembrane protease 2 from Caenorhabditis elegans.